The sequence spans 467 residues: Repressible acid phosphatase (467 aa).

An N-terminal signal peptide occupies residues 1–17; that stretch reads MFKSVVYSILAASLANA. His75 acts as the Nucleophile in catalysis. N-linked (GlcNAc...) asparagine glycans are attached at residues Asn97, Asn103, Asn162, Asn192, Asn250, and Asn315. Asp338 serves as the catalytic Proton donor. Residues Asn356, Asn390, Asn439, Asn445, Asn456, and Asn461 are each glycosylated (N-linked (GlcNAc...) asparagine).

Belongs to the histidine acid phosphatase family. Post-translationally, glycosylated during secretion across the membrane.

It is found in the secreted. The enzyme catalyses a phosphate monoester + H2O = an alcohol + phosphate. Its function is as follows. Partially mediates extracellular nucleotide derived phosphate hydrolysis along with NPP1 and NPP2. This Saccharomyces cerevisiae (strain ATCC 204508 / S288c) (Baker's yeast) protein is Repressible acid phosphatase (PHO5).